The following is a 135-amino-acid chain: Small ribosomal subunit protein uS11 (135 aa).

The span at 1–11 (MPPKARAGAAV) shows a compositional bias: low complexity. The segment at 1 to 22 (MPPKARAGAAVKKVRRKERKNV) is disordered.

It belongs to the universal ribosomal protein uS11 family. In terms of assembly, part of the 30S ribosomal subunit. Interacts with proteins S7 and S18. Binds to IF-3.

Functionally, located on the platform of the 30S subunit, it bridges several disparate RNA helices of the 16S rRNA. Forms part of the Shine-Dalgarno cleft in the 70S ribosome. The sequence is that of Small ribosomal subunit protein uS11 from Salinispora tropica (strain ATCC BAA-916 / DSM 44818 / JCM 13857 / NBRC 105044 / CNB-440).